The chain runs to 356 residues: uncharacterized protein (356 aa).

It is found in the cytoplasm. Its subcellular location is the nucleus. This is an uncharacterized protein from Saccharomyces cerevisiae (strain ATCC 204508 / S288c) (Baker's yeast).